Here is a 143-residue protein sequence, read N- to C-terminus: Hemoglobin cathodic subunit alpha (143 aa).

Ser-2 carries the post-translational modification N-acetylserine. In terms of domain architecture, Globin spans 2-143 (SLTAKDKSLI…LGAALSDKYR (142 aa)). Residue His-60 coordinates O2. A heme b-binding site is contributed by His-89.

It belongs to the globin family. Heterotetramer of two alpha chains and two beta chains. Red blood cells.

In terms of biological role, involved in oxygen transport from gills to the various peripheral tissues. In Anguilla anguilla (European freshwater eel), this protein is Hemoglobin cathodic subunit alpha.